A 128-amino-acid chain; its full sequence is Small ribosomal subunit protein eS8 (128 aa).

This sequence belongs to the eukaryotic ribosomal protein eS8 family. Part of the 30S ribosomal subunit.

In Methanococcus aeolicus (strain ATCC BAA-1280 / DSM 17508 / OCM 812 / Nankai-3), this protein is Small ribosomal subunit protein eS8.